The primary structure comprises 362 residues: Heme A synthase (362 aa).

A run of 5 helical transmembrane segments spans residues alanine 11–glycine 31, valine 102–glycine 122, leucine 128–serine 148, valine 159–leucine 179, and alanine 198–leucine 218. Histidine 262 contacts heme. Transmembrane regions (helical) follow at residues methionine 264–glycine 286, leucine 297–isoleucine 317, and serine 318–alanine 338. Histidine 323 serves as a coordination point for heme.

Belongs to the COX15/CtaA family. Type 2 subfamily. In terms of assembly, interacts with CtaB. It depends on heme b as a cofactor.

It localises to the cell membrane. The catalysed reaction is Fe(II)-heme o + 2 A + H2O = Fe(II)-heme a + 2 AH2. Its pathway is porphyrin-containing compound metabolism; heme A biosynthesis; heme A from heme O: step 1/1. In terms of biological role, catalyzes the conversion of heme O to heme A by two successive hydroxylations of the methyl group at C8. The first hydroxylation forms heme I, the second hydroxylation results in an unstable dihydroxymethyl group, which spontaneously dehydrates, resulting in the formyl group of heme A. The protein is Heme A synthase of Bradyrhizobium sp. (strain ORS 278).